Consider the following 205-residue polypeptide: Dephospho-CoA kinase (205 aa).

One can recognise a DPCK domain in the interval 7-204; the sequence is LVGLTGGIGS…ARYLAAARAT (198 aa). 15-20 lines the ATP pocket; sequence GSGKSA.

The protein belongs to the CoaE family.

The protein resides in the cytoplasm. The catalysed reaction is 3'-dephospho-CoA + ATP = ADP + CoA + H(+). It functions in the pathway cofactor biosynthesis; coenzyme A biosynthesis; CoA from (R)-pantothenate: step 5/5. Its function is as follows. Catalyzes the phosphorylation of the 3'-hydroxyl group of dephosphocoenzyme A to form coenzyme A. This Aromatoleum aromaticum (strain DSM 19018 / LMG 30748 / EbN1) (Azoarcus sp. (strain EbN1)) protein is Dephospho-CoA kinase.